A 714-amino-acid polypeptide reads, in one-letter code: RanBP-type and C3HC4-type zinc finger-containing protein 1 (714 aa).

2 disordered regions span residues 1–23 and 152–172; these read MSLSSGGWTRASPPAQSSSSHLG and SSSTEEGRLPPPPLATQSKAP. Over residues 14–23 the composition is skewed to polar residues; it reads PAQSSSSHLG. The 77-residue stretch at 225-301 folds into the Ubiquitin-like domain; the sequence is LAVVVEDASS…TAFLYLISAR (77 aa). Residues 394-426 form a RanBP2-type zinc finger; sequence RTSIQPGWACPTCTYINKPTRPGCEMCSADRPE. The interval 482–710 is TRIAD supradomain; the sequence is ERVECRICYV…VNKQRCHPKC (229 aa). The Zn(2+) site is built by cysteine 486, cysteine 489, cysteine 504, histidine 506, cysteine 509, cysteine 512, cysteine 527, cysteine 536, cysteine 575, cysteine 580, cysteine 595, cysteine 598, cysteine 603, cysteine 606, histidine 610, cysteine 615, cysteine 651, and cysteine 654. Residues 486 to 536 form an RING-type 1 zinc finger; the sequence is CRICYVELESGEGVLLRECLHCFCKECLRSVILMSEDPQVACPYRDESYAC. The segment at 555–615 adopts an IBR-type zinc-finger fold; the sequence is QHWLQRGLSV…CKAIHEGMNC (61 aa). The RING-type 2; atypical zinc-finger motif lies at 651-680; that stretch reads CPQCGIIVQKKEGCDWLRCTVCHTEICWVT. The active site involves cysteine 664. Positions 669 and 672 each coordinate Zn(2+).

This sequence belongs to the RBR family. As to quaternary structure, component of the LUBAC complex (linear ubiquitin chain assembly complex).

The enzyme catalyses [E2 ubiquitin-conjugating enzyme]-S-ubiquitinyl-L-cysteine + [acceptor protein]-L-lysine = [E2 ubiquitin-conjugating enzyme]-L-cysteine + [acceptor protein]-N(6)-ubiquitinyl-L-lysine.. It functions in the pathway protein modification; protein ubiquitination. Its function is as follows. Component of the LUBAC complex which conjugates linear ('Met-1'-linked) polyubiquitin chains to substrates and plays a key role in NF-kappa-B activation and regulation of inflammation. LUBAC conjugates linear polyubiquitin to ikbkg and RIPK1 and is involved in activation of the canonical NF-kappa-B and the JNK signaling pathways. Linear ubiquitination mediated by the LUBAC complex interferes with TNF-induced cell death and thereby prevents inflammation. LUBAC is recruited to the TNF-R1 signaling complex (TNF-RSC) to conjugate linear polyubiquitin to ikbkg and possibly other components contributing to the stability of the complex. The LUBAC complex is also involved in innate immunity by conjugating linear polyubiquitin chains at the surface of bacteria invading the cytosol to form the ubiquitin coat surrounding bacteria. LUBAC is not able to initiate formation of the bacterial ubiquitin coat, and can only promote formation of linear polyubiquitins on pre-existing ubiquitin. The bacterial ubiquitin coat acts as an 'eat-me' signal for xenophagy and promotes NF-kappa-B activation. Binds polyubiquitin of different linkage types. This Danio rerio (Zebrafish) protein is RanBP-type and C3HC4-type zinc finger-containing protein 1 (rbck1).